Consider the following 207-residue polypeptide: Segregation and condensation protein B (207 aa).

Positions Asp-173–Gln-207 are disordered.

The protein belongs to the ScpB family. In terms of assembly, homodimer. Homodimerization may be required to stabilize the binding of ScpA to the Smc head domains. Component of a cohesin-like complex composed of ScpA, ScpB and the Smc homodimer, in which ScpA and ScpB bind to the head domain of Smc. The presence of the three proteins is required for the association of the complex with DNA.

It localises to the cytoplasm. In terms of biological role, participates in chromosomal partition during cell division. May act via the formation of a condensin-like complex containing Smc and ScpA that pull DNA away from mid-cell into both cell halves. The chain is Segregation and condensation protein B from Latilactobacillus sakei subsp. sakei (strain 23K) (Lactobacillus sakei subsp. sakei).